The primary structure comprises 20 residues: Fibrinogen beta chain (20 aa).

The disordered stretch occupies residues 1–20 (ATDYEDEEFPGAVPPSVGAR). Threonine 2 carries an O-linked (GalNAc...) threonine glycan. Position 4 is a sulfotyrosine (tyrosine 4).

As to quaternary structure, heterohexamer; disulfide linked. Contains 2 sets of 3 non-identical chains (alpha, beta and gamma). The 2 heterotrimers are in head to head conformation with the N-termini in a small central domain. In terms of processing, conversion of fibrinogen to fibrin is triggered by thrombin, which cleaves fibrinopeptides A and B from alpha and beta chains, and thus exposes the N-terminal polymerization sites responsible for the formation of the soft clot.

Its subcellular location is the secreted. Its function is as follows. Cleaved by the protease thrombin to yield monomers which, together with fibrinogen alpha (FGA) and fibrinogen gamma (FGG), polymerize to form an insoluble fibrin matrix. Fibrin has a major function in hemostasis as one of the primary components of blood clots. In addition, functions during the early stages of wound repair to stabilize the lesion and guide cell migration during re-epithelialization. Was originally thought to be essential for platelet aggregation, based on in vitro studies using anticoagulated blood. However subsequent studies have shown that it is not absolutely required for thrombus formation in vivo. Enhances expression of SELP in activated platelets. Maternal fibrinogen is essential for successful pregnancy. Fibrin deposition is also associated with infection, where it protects against IFNG-mediated hemorrhage. May also facilitate the antibacterial immune response via both innate and T-cell mediated pathways. The chain is Fibrinogen beta chain (FGB) from Elephas maximus (Indian elephant).